A 296-amino-acid polypeptide reads, in one-letter code: tRNA uridine(34) hydroxylase (296 aa).

The Rhodanese domain maps to 130–225 (RGDDVVFFDG…YGEAYGNDGY (96 aa)). C185 serves as the catalytic Cysteine persulfide intermediate.

The protein belongs to the TrhO family.

The enzyme catalyses uridine(34) in tRNA + AH2 + O2 = 5-hydroxyuridine(34) in tRNA + A + H2O. Catalyzes oxygen-dependent 5-hydroxyuridine (ho5U) modification at position 34 in tRNAs. This Corynebacterium kroppenstedtii (strain DSM 44385 / JCM 11950 / CIP 105744 / CCUG 35717) protein is tRNA uridine(34) hydroxylase.